We begin with the raw amino-acid sequence, 202 residues long: Alpha-1-acid glycoprotein (202 aa).

The first 18 residues, 1–18, serve as a signal peptide directing secretion; sequence MALLWALAVLSHLPLLDA. Asn-34, Asn-57, Asn-94, Asn-104, and Asn-136 each carry an N-linked (GlcNAc...) asparagine glycan. The cysteines at positions 91 and 184 are disulfide-linked.

The protein belongs to the calycin superfamily. Lipocalin family.

It localises to the secreted. Functions as a transport protein in the blood stream. Binds various ligands in the interior of its beta-barrel domain. Appears to function in modulating the activity of the immune system during the acute-phase reaction. This is Alpha-1-acid glycoprotein (ORM1) from Bos taurus (Bovine).